The primary structure comprises 1423 residues: DNA-directed RNA polymerase subunit beta' (1423 aa).

Zn(2+) contacts are provided by Cys-71, Cys-73, Cys-86, and Cys-89. Positions 461, 463, and 465 each coordinate Mg(2+). Positions 815, 889, 896, and 899 each coordinate Zn(2+).

This sequence belongs to the RNA polymerase beta' chain family. The RNAP catalytic core consists of 2 alpha, 1 beta, 1 beta' and 1 omega subunit. When a sigma factor is associated with the core the holoenzyme is formed, which can initiate transcription. Mg(2+) is required as a cofactor. It depends on Zn(2+) as a cofactor.

It catalyses the reaction RNA(n) + a ribonucleoside 5'-triphosphate = RNA(n+1) + diphosphate. Its function is as follows. DNA-dependent RNA polymerase catalyzes the transcription of DNA into RNA using the four ribonucleoside triphosphates as substrates. This Actinobacillus pleuropneumoniae serotype 3 (strain JL03) protein is DNA-directed RNA polymerase subunit beta'.